The chain runs to 4306 residues: MAGSLGDVRKLFLFTTTQNYFGLRPELWDQPPLSNCPEVNNFLDDGNQMLLRVQRSEAGLAFSNTIDFDDAKDKVLVFFKLRPEVITDGNLHNNILVSSMLESPINSLYQAVRQVFAPMLLKDQEWSRNFDPKLQNLLSELEAGLGIVLRKSDTNLPKLKLKEDDTRGILTPSDEFQFWIEQAHRGSKQISKERASYFKELFETISREFYNLDSLSLLEVVDLVETTRDVVDDVWRQTEHDHYPESRMLHLLDVIGGSFGRFVQKKLGSLKLWEDPYYLVKENLKAGISICEQWVIVCSHLTGQVWQRYVPHPWKSGKYFPETLDKLGKRLEEVLAIRTIHEKLLYFLPASEERIVCLSRVFEPFTGVNPVQYNPYTEPLWKAAVSQYEKIIAPAEQKIAGKLKNYISEIQDSPQQLLQAFLKYKELVKRPTISKELMLERETLLARLGDSAKDFRLDFENRCRGIPGDPSGPLSGKNLSEVVNNIVWVRQLELKVDDTIKIAEALLSDLSGFRSFHRSAEDLLDQFKLYEQEQFDDWSREVQSGLSDSRSGLCIEANSRIMELDPNDGALKVHYSDRLVILLREVRQLSALGFVIPAKIQQVANVAQKFCKQAIILKQVAHFYNSIDQQMIQSQRPMMLQSALAFEQIIKNSKAGSGGKSQITWDNPKELEGYIQKLQNAAERLATENRRLRKWHTTFCEKVVILMNIDLLRQQQRWKDGLQELRTGLATVAAQGFQASDMRAWRQHWNHQLYKALEHQYQVGLEALNENLPEINVDLTYKQGRLQFRPPFEEIRAKYYREMKRFIGIPNQFKGVGEAGDESIFSVMIDRNASGFLTIYSKAEDLFRRLSAVLHQHKEWVVIGQVDMEALVEKNLSTVHDWEKNFKALKIKGKEVERLPSAVKVDCLNINCSPVKTVIDDLIQKLFDLLVLSLKKSIQTHIHEIDTFVTEAMKVLTVIPQSVEEIGDTNVQYSNLQDRRPEILPLFQEAEDKNRLLRTVAGGGVETVSNLRAKWDKFELMMESHQLMIKDQIEVMKGNVKSRLQIYYQELDKFKARWDQLKPGDDIIETGQQNTMDQSAKSIKEKKIEFDDLEVIRKKLVDDCHHFGLEEPNFSLAYSISKDIESCAQIWALYEEFQQGLQDMAKEDWITYRAKIYLFEEFLINWHERLRKIEEHSVMTVKLQSEVDRYKMIIPILKYVRGEHLSPDHWLDLFRLLGLPRGTSLEKLLFGDLLRVADTIVEKASELKDLNSRAQGEVTIREALRELDLWGVGAVFSLIDYEDSQNHTIKLIKDWKDIVNQVGDNRCLLQSLKDSPYYKGFEDKVSIWERKLAQLDEYLQNLNHIQRKWVYLEPIFGRGALPKEQTRFNKVDEDFRSIMMDIRKDSRVTTLTTHAGIRNTLLTILDQLQRCQKSLNEFLEEKRSAFPRFYFIGDDDLLEILGQSTNPSVIQSHLKKLFAGINSVCFDEESKHITAMKSLEGEVVPFKSKVLLSNNVEAWLNDLALEMKQTLKQLLKECVTAGRSSQGAIDPSLFPSQILCLAEQIKFTEDVENAIKDHSLHQIEAQLVAKLERYTSVDTSSEDPGNSESGILELKLKALILDIIHNIDIVKQLNQVQVHTTDDWAWKKQVRFYMKSDHTCYVQMVDSELQYTYEYQGNAPKLVYTPLTDKCYLTLTQAMKMGLGGNPYGPAGTGKTESVKALGGLLGRQVLVFNCDEGIDVKSMGRIFVGLVKCGAWGCFDEFNRLEEAVLSAVSMQIQTIQDALKNHRTVCELLGKEVEINANSGIFITMNPAGKGYGGRQKLPDNLKQLFRPVAMSRPDNDLIAEVILYSEGFKDAKELGRKLVAIFNLSRELLTPQQHYDWGLRALKTVLRGSGNLLRQLKKNSTKQDVNENHIVVQALRLNTMSKFTFADCTRFDALIKDVFPGIDFKEVEYDELSSALKQVFEEANYEVIPNQMKKALELYEQLRQRTGVVIVGPSGAGKSTLWRMLRAALCKIGKVVKQYTMNPKAMPRHQLLGHIDMDTREWSDGVLTNSARQVVREPQDVSSWIICDGDIDPEWIESLNSVLDDNRLLTMPSGERIQFGPNVNFVFETHDLSCASPATISRMGMIFLSDEETDLNSLIKSWLRNQPLEYRSNLENWIGDYFSKALQWVLKQNDYVVETSLVGTVMNGLSHLHGCKYHDQFIINLIRGLGGNLNMKSRLEFTKEVFNWARETPPDSHRPMDTYYDCDRGQLASYMLKKPESLTADDFSNGHILPVIQTPDMQRGLDYFKPWLSSDTKQPFILVGPEGCGKGMLLRYAFSQLRSTEIATIHCSAQTTSRHLLQKLSQTCMVISTNTGRVYRPKDCERLVLYLKDINLPKLDKWGTSTLVAFLQQVLTYQGFYDENLEWVGLENIQIVASMSAGGRLGRHKLTTRFTSIVRLCAIDYPEREQLQTIYGAYLEAVLHKNLKNHSIWGSSSKIYLLAGSMVQVYEQVRAKFTVDEYSHYFFTPCILTQWVLGLFRYDLEGGSSNHPLDYVLEIVAYEARRLFRDKIVGVKELHLFDNILTSVLQGDWGSDILDNMADSFYVTWGAHHVSGGKTAPGQPLPPHGKPLGKLTSADLKDVIKKGLIHYGRDNQNLDILLFQEVLEYMSRIDRVLSFPGGSLLLAGRSGVGRRTVTSLVSHMHGAVLFSPKISRGYEPKQFRNDLKHVLQLAGIEAQQVVLLLEDYQFVHPTFLEMINSLLASGEVPGLYTLEELEPLLLPLKDQASQDGFFGPVFNYFTYRIQQNLHIVLIMDSANLNFIVNCESNPALHKKCQVLWMEGWSDSSMKKIPEMLFSETDGEEKYEKKRKDEKKRNSVDPDFIKSFLLIHESCKAYGATPSRYMTFLHVYSAISSSKKKELLKRQSHLQAGVSKLNEAKALVDELNRKAGEQSILLRIKQDEADSALQEITVSMQDASEQKTELERLKQRIAEEVVKIEERKSKIDDELKEVQPLVNEAKLAVGNIRPESLSEIRSLRMPPDVIRDILEGVLRLMGIFDTSWVSMKSFLAKRGVREDIATFDARNIPKEIRESVEELLFKNKASFDPKNAKRASTAAAPLAAWVKANVQYSHVLERIQPLETEQSGLELNLKKTEDRKRKLEDLLNSVGQKVSELKEKFQSRTSEAAKLEAEVSKAQETIKAAEVLISQLDREHRRWNAQVAEIAEELATLPKRAQLAAAFITYLSAAPEGLRKNCLEEWTKAAGLEKFDLRRFLCTESEQLIWKSEGLPSDDLSIENALVILQSRVCPFLIDPSSQATEWLKTHLKDSHLEVINQQDSNFITALELAVRFGKTLIIQEMDGVEPVLYPLLRRDLVAQGPRYVVQIGDKIIDYNEDFRLFLSTRNPNPFIPPDAASIVTEVNFTTTRSGLRGQLLALTIQHEKPDLEEQKTKLLQQEEDKKIQLARLEESLLETLATSQGNILENKDLIESLNQTKASSALIQDSLKESYKLQISLDQERDAYLPLAESASKMYFIISDLSKINNMYRFSLASFLRLFQRALQNKQDSENTEERIQCLVNSLKHMVYEYICRCLFKADQLMFALHFVRGMHPELFQENEWDTFTGVVVGDMLRKADSQQRIRDQLPSWIDQERSWAVATLKISLPSLYQTLCLEDGAFWRTYYHHSMCEQEFPSILAKKVSLFQQVLVVQALRPDRLQSAMALFACKALGLKELSPLPLNLKRLYKETLEIEPILIIISPGADPSQELQELASAERSSECYHQVAMGQGQADLAIQMLKECARNGDWLCLKNLHLVVSWLPVLEKELNTLQPKDSFRLWLTAEVHPNFTPILLQSSLKITYESPPGLKKNLMRTYESWTPEQISKRDNIHRAHALFSLAWFHAACQERRNYIPQGWTKFYEFSLSDLRAGYHVIDRLFDGTKDVQWEFVHGLLENSIYGGRVDNYFDLRVLQSYLKQFFNSSIIDVLNQRNKKSIFPYSISLPNSCSILDYRAVIEKLPEDDKPSFFGLPANIARSSQRMISSQVISQLRILGRSVTAGCKFDREIWSNELSPVLNLWKKLNQNSNLIHQKVSPPNDRQGSPILSFIILEQFNAIRLVQSVHQSLAALSKVIRGTTLLSSEVQKLASALLNQKCPLTWQSRWEGPEDPLQYLRGLVARTLAIQNWVEKAEKQVLLADTLDLSELFHPDTFLNALRQETARATGCSVDSLKFVASWKGRLQEAKLQIKISGLLLEGCSFDGNRLSENQHDSPSVSSVLPCYMGWTPQGSYGPYSPDECISLPVYTSAERERVVTNIDVPCGGNQDQWIQCGAALFLKNQ.

The interval 1 to 1650 (MAGSLGDVRK…YVQMVDSELQ (1650 aa)) is stem. Residue 145–152 (LGIVLRKS) coordinates ATP. A coiled-coil region spans residues 669 to 696 (KELEGYIQKLQNAAERLATENRRLRKWH). AAA regions lie at residues 1651–1875 (YTYE…VLRG), 1941–2161 (SALK…KQND), 2249–2505 (LTAD…WVLG), and 2617–2862 (HYGR…ESCK). Residues 1689 to 1696 (GPAGTGKT), 1979 to 1986 (GPSGAGKS), 2291 to 2298 (GPEGCGKG), and 2655 to 2662 (GRSGVGRR) contribute to the ATP site. Positions 2880 to 3168 (AISSSKKKEL…AEVSKAQETI (289 aa)) are stalk. Coiled coils occupy residues 2896–2981 (LQAG…KEVQ), 3108–3199 (LETE…LATL), and 3407–3441 (IQHE…SLLE). AAA stretches follow at residues 3243–3472 (LCTE…LIQD) and 3689–3904 (MALF…VIDR).

This sequence belongs to the dynein heavy chain family. In terms of assembly, the cytoplasmic dynein complex 2 is probably composed by a heavy chain DYNC2H1 homodimer and a number of DYNC2LI1 light intermediate chains. As to expression, detected in brain, lung, spleen and kidney (at protein level). Enriched in the ependymal layer lining the lateral ventricles (at protein level).

It is found in the cytoplasm. Its subcellular location is the cytoskeleton. It localises to the cilium axoneme. The protein localises to the cell membrane. Its function is as follows. May function as a motor for intraflagellar retrograde transport. Functions in cilia biogenesis. According to PubMed:8666668, it may play a role in transport between endoplasmic reticulum and Golgi or organization of the Golgi in cells. This Mus musculus (Mouse) protein is Cytoplasmic dynein 2 heavy chain 1 (Dync2h1).